Reading from the N-terminus, the 98-residue chain is Integration host factor subunit beta (98 aa).

This sequence belongs to the bacterial histone-like protein family. Heterodimer of an alpha and a beta chain.

Functionally, this protein is one of the two subunits of integration host factor, a specific DNA-binding protein that functions in genetic recombination as well as in transcriptional and translational control. This Pseudomonas syringae pv. tomato (strain ATCC BAA-871 / DC3000) protein is Integration host factor subunit beta.